The following is a 269-amino-acid chain: Ribosomal RNA small subunit methyltransferase A (269 aa).

Positions 12, 14, 39, 60, 81, and 103 each coordinate S-adenosyl-L-methionine.

The protein belongs to the class I-like SAM-binding methyltransferase superfamily. rRNA adenine N(6)-methyltransferase family. RsmA subfamily.

It localises to the cytoplasm. The catalysed reaction is adenosine(1518)/adenosine(1519) in 16S rRNA + 4 S-adenosyl-L-methionine = N(6)-dimethyladenosine(1518)/N(6)-dimethyladenosine(1519) in 16S rRNA + 4 S-adenosyl-L-homocysteine + 4 H(+). Its function is as follows. Specifically dimethylates two adjacent adenosines (A1518 and A1519) in the loop of a conserved hairpin near the 3'-end of 16S rRNA in the 30S particle. May play a critical role in biogenesis of 30S subunits. In Leptothrix cholodnii (strain ATCC 51168 / LMG 8142 / SP-6) (Leptothrix discophora (strain SP-6)), this protein is Ribosomal RNA small subunit methyltransferase A.